We begin with the raw amino-acid sequence, 418 residues long: MIFDKDDFKAYDADLWNAIAKEEERQQNNIELIASENVVSKAVMAAQGSILTNKYAEGYPGRRYYGGTDVVDVVETLAIERAKEIFGAKFANVQPHSGSQANCAAYMSLIEPGDTVMGMDLASGGHLTHGAPVSFSGQTYNFVSYSVDPKTELLDFDAILKQAQEVKPKLIVAGASAYSQIIDFSKFREIADAVGAKLMVDMAHIAGLVAAGLHPSPVPYAHITTTTTHKTLRGPRGGLILTNDEELAKKINSAIFPGIQGGPLEHVVAAKAVSFKEVLDPAFKEYAANVIKNSKAMADVFLQDPDFRIISGGTENHLFLVDVTKVVENGKVAQNLLDEVNITLNKNSIPYETLSPFKTSGIRIGAAAITAREFGEEESRKVAELIIKTLKNSENEAVLEEVRSAVKELTDAFPLYEE.

(6S)-5,6,7,8-tetrahydrofolate is bound by residues leucine 121 and 125-127 (GHL). Lysine 230 is modified (N6-(pyridoxal phosphate)lysine). Residues glutamate 246 and 355 to 357 (SPF) each bind (6S)-5,6,7,8-tetrahydrofolate.

Belongs to the SHMT family. In terms of assembly, homodimer. The cofactor is pyridoxal 5'-phosphate.

The protein localises to the cytoplasm. It catalyses the reaction (6R)-5,10-methylene-5,6,7,8-tetrahydrofolate + glycine + H2O = (6S)-5,6,7,8-tetrahydrofolate + L-serine. The protein operates within one-carbon metabolism; tetrahydrofolate interconversion. It participates in amino-acid biosynthesis; glycine biosynthesis; glycine from L-serine: step 1/1. In terms of biological role, catalyzes the reversible interconversion of serine and glycine with tetrahydrofolate (THF) serving as the one-carbon carrier. This reaction serves as the major source of one-carbon groups required for the biosynthesis of purines, thymidylate, methionine, and other important biomolecules. Also exhibits THF-independent aldolase activity toward beta-hydroxyamino acids, producing glycine and aldehydes, via a retro-aldol mechanism. The polypeptide is Serine hydroxymethyltransferase (Streptococcus pneumoniae (strain 70585)).